We begin with the raw amino-acid sequence, 488 residues long: Zinc metalloproteinase-disintegrin VMP-II (488 aa).

The first 20 residues, 1-20, serve as a signal peptide directing secretion; the sequence is MIQVLLVTICLAVFPYQGSS. Residues 21 to 191 constitute a propeptide that is removed on maturation; it reads IILESGNVND…KASQSNIPPE (171 aa). One can recognise a Peptidase M12B domain in the interval 198 to 396; that stretch reads RYIELVVVAD…STTRCLHNEP (199 aa). Residues glutamate 201 and aspartate 285 each coordinate Ca(2+). Asparagine 296 carries N-linked (GlcNAc...) asparagine glycosylation. 3 disulfides stabilise this stretch: cysteine 309–cysteine 391, cysteine 349–cysteine 373, and cysteine 351–cysteine 356. Histidine 334 is a binding site for Zn(2+). Residue glutamate 335 is part of the active site. Histidine 338 and histidine 344 together coordinate Zn(2+). Positions 391, 394, 409, 413, 416, and 419 each coordinate Ca(2+). A Disintegrin domain is found at 404–488; the sequence is PPFCGNYFKE…ADCPRNGLYG (85 aa). Cystine bridges form between cysteine 407-cysteine 426, cysteine 418-cysteine 436, cysteine 420-cysteine 431, cysteine 430-cysteine 453, cysteine 444-cysteine 450, cysteine 449-cysteine 474, and cysteine 462-cysteine 481. Positions 466–468 match the Cell attachment site motif; sequence RGD.

The protein belongs to the venom metalloproteinase (M12B) family. P-II subfamily. P-IIb sub-subfamily. As to quaternary structure, homodimer; disulfide-linked (disintegrin). The cofactor is Zn(2+). In terms of tissue distribution, expressed by the venom gland.

The protein localises to the secreted. Functionally, zinc metalloproteinase-disintegrin VMP-II: inhibits ADP-induced platelet aggregation (probably by binding integrin alpha-IIb/beta-3 (ITGA2B/ITGB3)) and degrades fibrinogen. Its function is as follows. Recombinant disintegrin r-Cam-dis (413-488): this recombinant protein inhibits platelet adhesion to fibrinogen (IC(50) is 1 nM), inhibits collagen- (IC(50) is 18 nM) and ADP-induced (IC(50) is 6 nM) platelet aggregation, and also inhibits platelet function on clot retraction. May act by binding integrin alpha-IIb/beta-3 (ITGA2B/ITGB3). This Crotalus adamanteus (Eastern diamondback rattlesnake) protein is Zinc metalloproteinase-disintegrin VMP-II.